Here is a 541-residue protein sequence, read N- to C-terminus: Chaperonin GroEL 2 (541 aa).

Residues 29–32, 86–90, Gly-413, 476–478, and Asp-492 contribute to the ATP site; these read TLGP, DGTTT, and NAA.

The protein belongs to the chaperonin (HSP60) family. As to quaternary structure, forms a cylinder of 14 subunits composed of two heptameric rings stacked back-to-back. Interacts with the co-chaperonin GroES.

The protein resides in the secreted. Its subcellular location is the capsule. It is found in the cell surface. It localises to the cell wall. The catalysed reaction is ATP + H2O + a folded polypeptide = ADP + phosphate + an unfolded polypeptide.. Together with its co-chaperonin GroES, plays an essential role in assisting protein folding. The GroEL-GroES system forms a nano-cage that allows encapsulation of the non-native substrate proteins and provides a physical environment optimized to promote and accelerate protein folding. The protein is Chaperonin GroEL 2 of Mycolicibacterium vanbaalenii (strain DSM 7251 / JCM 13017 / BCRC 16820 / KCTC 9966 / NRRL B-24157 / PYR-1) (Mycobacterium vanbaalenii).